The sequence spans 213 residues: Nicotinamidase (213 aa).

Catalysis depends on aspartate 10, which acts as the Proton acceptor. Aspartate 52, histidine 54, and histidine 86 together coordinate Zn(2+). Lysine 111 is a catalytic residue. Catalysis depends on cysteine 156, which acts as the Nucleophile.

It belongs to the isochorismatase family.

It catalyses the reaction nicotinamide + H2O = nicotinate + NH4(+). The enzyme catalyses pyrazinamide + H2O = pyrazine-2-carboxylate + NH4(+). It functions in the pathway cofactor biosynthesis; nicotinate biosynthesis; nicotinate from nicotinamide: step 1/1. In terms of biological role, catalyzes the deamidation of nicotinamide (NAM) into nicotinate. Likely functions in the cyclical salvage pathway for production of NAD from nicotinamide. Functionally, is also able to hydrolyze the first-line antituberculous drug pyrazinamide (PZA) into pyrazinoic acid in vitro, but this reaction is not considered to be physiologically relevant. The polypeptide is Nicotinamidase (Escherichia coli (strain K12)).